A 185-amino-acid polypeptide reads, in one-letter code: Proton-translocating ferredoxin:NAD(+) oxidoreductase complex subunit G (185 aa).

A helical transmembrane segment spans residues 14–34; it reads TKNLTITCFISGIIIAAVYYI. Threonine 161 carries the post-translational modification FMN phosphoryl threonine.

Belongs to the RnfG family. The complex is composed of six subunits: RnfA, RnfB, RnfC, RnfD, RnfE and RnfG. FMN serves as cofactor.

It is found in the cell membrane. Part of a membrane-bound complex that couples electron transfer with translocation of ions across the membrane. Couples electron transfer from reduced ferredoxin to NAD(+) with translocation of H(+) out of the cell. Essential for energy conservation during autotrophic growth. Contributes to ATP synthesis during heterotrophic growth. This is Proton-translocating ferredoxin:NAD(+) oxidoreductase complex subunit G from Clostridium ljungdahlii (strain ATCC 55383 / DSM 13528 / PETC).